Consider the following 150-residue polypeptide: Transcriptional repressor NrdR (150 aa).

A zinc finger spans residues 3–34 (CPFCNASDTKVVDTRASEDDKIVRRRRECISC). Positions 49-139 (LTVVKKDKNR…VYREFTDVKS (91 aa)) constitute an ATP-cone domain.

It belongs to the NrdR family. Zn(2+) serves as cofactor.

Negatively regulates transcription of bacterial ribonucleotide reductase nrd genes and operons by binding to NrdR-boxes. This is Transcriptional repressor NrdR from Finegoldia magna (strain ATCC 29328 / DSM 20472 / WAL 2508) (Peptostreptococcus magnus).